The chain runs to 181 residues: Peptide methionine sulfoxide reductase MsrA (181 aa).

The active site involves Cys-14.

It belongs to the MsrA Met sulfoxide reductase family.

The catalysed reaction is L-methionyl-[protein] + [thioredoxin]-disulfide + H2O = L-methionyl-(S)-S-oxide-[protein] + [thioredoxin]-dithiol. It catalyses the reaction [thioredoxin]-disulfide + L-methionine + H2O = L-methionine (S)-S-oxide + [thioredoxin]-dithiol. Functionally, has an important function as a repair enzyme for proteins that have been inactivated by oxidation. Catalyzes the reversible oxidation-reduction of methionine sulfoxide in proteins to methionine. The polypeptide is Peptide methionine sulfoxide reductase MsrA (Bacillus licheniformis (strain ATCC 14580 / DSM 13 / JCM 2505 / CCUG 7422 / NBRC 12200 / NCIMB 9375 / NCTC 10341 / NRRL NRS-1264 / Gibson 46)).